Reading from the N-terminus, the 225-residue chain is NAD(P)H-quinone oxidoreductase subunit K, chloroplastic (225 aa).

4 residues coordinate [4Fe-4S] cluster: Cys43, Cys44, Cys108, and Cys139.

It belongs to the complex I 20 kDa subunit family. NDH is composed of at least 16 different subunits, 5 of which are encoded in the nucleus. The cofactor is [4Fe-4S] cluster.

The protein localises to the plastid. Its subcellular location is the chloroplast thylakoid membrane. It catalyses the reaction a plastoquinone + NADH + (n+1) H(+)(in) = a plastoquinol + NAD(+) + n H(+)(out). The enzyme catalyses a plastoquinone + NADPH + (n+1) H(+)(in) = a plastoquinol + NADP(+) + n H(+)(out). Functionally, NDH shuttles electrons from NAD(P)H:plastoquinone, via FMN and iron-sulfur (Fe-S) centers, to quinones in the photosynthetic chain and possibly in a chloroplast respiratory chain. The immediate electron acceptor for the enzyme in this species is believed to be plastoquinone. Couples the redox reaction to proton translocation, and thus conserves the redox energy in a proton gradient. The sequence is that of NAD(P)H-quinone oxidoreductase subunit K, chloroplastic from Hordeum vulgare (Barley).